The primary structure comprises 430 residues: uncharacterized protein (430 aa).

10 helical membrane passes run 13 to 33 (FFAALASQMGTTVGNMAFAFF), 47 to 67 (LAELMYSLPTIFVFLIVGVVA), 88 to 108 (VVLFFTLFTGNIPLVFCILFI), 138 to 158 (GLNQMLFSIFMVFGVGIGAFM), 228 to 248 (LIFGFFIFGFVNGGFAVLPMF), 264 to 284 (SVFTIALGFGLLAGSVIGTLI), 296 to 316 (IPIFIAGLLIFVLGYTNILWV), 319 to 339 (AAAFALGMCIGPINIAIGGWM), 358 to 378 (FMMFAQSLTLGLVALLFPKFV), and 383 to 403 (YLYYGMGVIILLVFIFYFIAL).

The protein belongs to the major facilitator superfamily.

Its subcellular location is the cell membrane. This is an uncharacterized protein from Bacillus subtilis (strain 168).